Here is a 563-residue protein sequence, read N- to C-terminus: Lipase 1 (563 aa).

The signal sequence occupies residues 1 to 19 (MVSKTFFLAAALNVVGTLA). Q20 carries the pyrrolidone carboxylic acid modification. C80 and C124 are disulfide-bonded. S236 acts as the Acyl-ester intermediate in catalysis. A disulfide bridge links C295 with C307. A glycan (N-linked (GlcNAc...) asparagine) is linked at N302. The Charge relay system role is filled by E373. N383 carries an N-linked (GlcNAc...) asparagine glycan. The Charge relay system role is filled by H482.

Belongs to the type-B carboxylesterase/lipase family. In terms of assembly, monomer.

The protein resides in the secreted. It catalyses the reaction a triacylglycerol + H2O = a diacylglycerol + a fatty acid + H(+). Functionally, hydrolyzes all ester bonds in triglyceride and displays a high affinity for triolein. For unsaturated substrates having long fatty acyl chains (C18:2 cis-9, cis-12 and C18:3 cis-9, cis-12, cis-15) GCL I shows higher specific activity than GCL II, whereas GCL II shows higher specific activity against saturated substrates having short fatty acid chains (C8, C10, C12 and C14). This chain is Lipase 1 (LIP1), found in Geotrichum candidum (Oospora lactis).